A 544-amino-acid chain; its full sequence is Chaperonin GroEL 1 (544 aa).

Residues T30–P33, K51, D87–T91, G415, D481–L483, and D497 each bind ATP.

It belongs to the chaperonin (HSP60) family. As to quaternary structure, forms a cylinder of 14 subunits composed of two heptameric rings stacked back-to-back. Interacts with the co-chaperonin GroES.

Its subcellular location is the cytoplasm. It catalyses the reaction ATP + H2O + a folded polypeptide = ADP + phosphate + an unfolded polypeptide.. Functionally, together with its co-chaperonin GroES, plays an essential role in assisting protein folding. The GroEL-GroES system forms a nano-cage that allows encapsulation of the non-native substrate proteins and provides a physical environment optimized to promote and accelerate protein folding. This is Chaperonin GroEL 1 from Chlamydia pneumoniae (Chlamydophila pneumoniae).